A 505-amino-acid chain; its full sequence is ATP synthase subunit alpha (505 aa).

Position 170-177 (170-177 (GDRQTGKT)) interacts with ATP.

Belongs to the ATPase alpha/beta chains family. F-type ATPases have 2 components, CF(1) - the catalytic core - and CF(0) - the membrane proton channel. CF(1) has five subunits: alpha(3), beta(3), gamma(1), delta(1), epsilon(1). CF(0) has four main subunits: a(1), b(1), b'(1) and c(9-12).

The protein localises to the cellular thylakoid membrane. It catalyses the reaction ATP + H2O + 4 H(+)(in) = ADP + phosphate + 5 H(+)(out). Functionally, produces ATP from ADP in the presence of a proton gradient across the membrane. The alpha chain is a regulatory subunit. The protein is ATP synthase subunit alpha of Prochlorococcus marinus (strain SARG / CCMP1375 / SS120).